The primary structure comprises 262 residues: ELL-associated factor 2 (262 aa).

The interval 17-104 (LKLGESFEKQ…TGECRLEKLS (88 aa)) is necessary for interaction with ELL. Phosphoserine occurs at positions 146, 151, and 154. The segment at 170–237 (MDQMSSCDSS…EADATCHRLQ (68 aa)) is disordered. Over residues 174–192 (SSCDSSSDSKSSSSSSSED) the composition is skewed to low complexity. The tract at residues 177 to 262 (DSSSDSKSSS…LSESESDSED (86 aa)) is necessary for transactivation activity. Residues 193–202 (SSSDSEDDDQ) show a composition bias toward acidic residues. Basic and acidic residues predominate over residues 227-237 (SEADATCHRLQ). The segment at 248-262 (RSDLQLSESESDSED) is necessary for interaction with TCEA1 and transactivation activity.

This sequence belongs to the EAF family. In terms of assembly, component of the super elongation complex (SEC), at least composed of EAF1, EAF2, CDK9, MLLT3/AF9, AFF (AFF1 or AFF4), the P-TEFb complex and ELL (ELL, ELL2 or ELL3). Interacts with ELL and ELL2. Isoform 1 and isoform 2 interact with TCEA1. As to expression, isoform 1 is expressed in ovary, uterus, mammary glands, brain, spleen, liver, lung, thymus, kidney, skeletal muscle, skin and testis. Isoform 2 is expressed in kidney.

The protein resides in the nucleus speckle. Acts as a transcriptional transactivator of ELL and ELL2 elongation activities. Acts as a transcriptional transactivator of TCEA1 elongation activity. The protein is ELL-associated factor 2 (Eaf2) of Mus musculus (Mouse).